We begin with the raw amino-acid sequence, 427 residues long: Zinc-finger homeodomain protein 7 (427 aa).

Disordered regions lie at residues 1 to 60 and 91 to 118; these read MEYK…SLMD and LHAAHHHGQGRRVEAPGGESQHHLQRHH. The span at 10–28 shows a compositional bias: acidic residues; that stretch reads EEEEEEEEEEDDEEEDEEE. Residues 50–60 are compositionally biased toward low complexity; that stretch reads SSASSPSSLMD. The ZF-HD dimerization-type; degenerate zinc-finger motif lies at 163-211; that stretch reads YRECLKNHAARMGAHVLDGCGEFMSSPGDGAAALACAACGCHRSFHRRE. 2 disordered regions span residues 264–320 and 375–427; these read KRPP…SKKR and HLAK…QHDA. 2 stretches are compositionally biased toward low complexity: residues 271 to 283 and 301 to 312; these read VSPASAPAALAES and HAAAVVAASASA. Residues 318–381 constitute a DNA-binding region (homeobox); that stretch reads KKRFRTKFTA…NNKHLAKTPP (64 aa). Over residues 380-401 the composition is skewed to pro residues; it reads PPSPTSQPPPPPLHHDPSPPPP. A compositionally biased stretch (basic residues) spans 402-416; that stretch reads PHHHHHHHHHHHPPQ. Residues 417–427 are compositionally biased toward low complexity; sequence HHQQQQQQHDA.

In terms of assembly, homo- and heterodimer with other ZFHD proteins.

It localises to the nucleus. Putative transcription factor. The protein is Zinc-finger homeodomain protein 7 (ZHD7) of Oryza sativa subsp. japonica (Rice).